Reading from the N-terminus, the 371-residue chain is tRNA-specific 2-thiouridylase MnmA (371 aa).

Residues 14-21 (GMSGGVDS) and Met40 each bind ATP. The interval 100 to 102 (NPD) is interaction with target base in tRNA. Cys105 (nucleophile) is an active-site residue. The cysteines at positions 105 and 205 are disulfide-linked. Gly129 contacts ATP. Positions 155–157 (KDQ) are interaction with tRNA. Catalysis depends on Cys205, which acts as the Cysteine persulfide intermediate. The segment at 321 to 322 (RY) is interaction with tRNA.

Belongs to the MnmA/TRMU family.

The protein resides in the cytoplasm. It catalyses the reaction S-sulfanyl-L-cysteinyl-[protein] + uridine(34) in tRNA + AH2 + ATP = 2-thiouridine(34) in tRNA + L-cysteinyl-[protein] + A + AMP + diphosphate + H(+). Catalyzes the 2-thiolation of uridine at the wobble position (U34) of tRNA, leading to the formation of s(2)U34. This Bordetella parapertussis (strain 12822 / ATCC BAA-587 / NCTC 13253) protein is tRNA-specific 2-thiouridylase MnmA.